We begin with the raw amino-acid sequence, 168 residues long: Sec-independent protein translocase protein TatB (168 aa).

Residues 1 to 21 (MIDLGISKLALIGAVALIVIG) form a helical membrane-spanning segment.

This sequence belongs to the TatB family. The Tat system comprises two distinct complexes: a TatABC complex, containing multiple copies of TatA, TatB and TatC subunits, and a separate TatA complex, containing only TatA subunits. Substrates initially bind to the TatABC complex, which probably triggers association of the separate TatA complex to form the active translocon.

It localises to the cell inner membrane. Functionally, part of the twin-arginine translocation (Tat) system that transports large folded proteins containing a characteristic twin-arginine motif in their signal peptide across membranes. Together with TatC, TatB is part of a receptor directly interacting with Tat signal peptides. TatB may form an oligomeric binding site that transiently accommodates folded Tat precursor proteins before their translocation. The sequence is that of Sec-independent protein translocase protein TatB from Cupriavidus pinatubonensis (strain JMP 134 / LMG 1197) (Cupriavidus necator (strain JMP 134)).